The sequence spans 158 residues: NAD(P)H-quinone oxidoreductase subunit J, chloroplastic (158 aa).

Belongs to the complex I 30 kDa subunit family. As to quaternary structure, NDH is composed of at least 16 different subunits, 5 of which are encoded in the nucleus.

It is found in the plastid. It localises to the chloroplast thylakoid membrane. The enzyme catalyses a plastoquinone + NADH + (n+1) H(+)(in) = a plastoquinol + NAD(+) + n H(+)(out). The catalysed reaction is a plastoquinone + NADPH + (n+1) H(+)(in) = a plastoquinol + NADP(+) + n H(+)(out). Its function is as follows. NDH shuttles electrons from NAD(P)H:plastoquinone, via FMN and iron-sulfur (Fe-S) centers, to quinones in the photosynthetic chain and possibly in a chloroplast respiratory chain. The immediate electron acceptor for the enzyme in this species is believed to be plastoquinone. Couples the redox reaction to proton translocation, and thus conserves the redox energy in a proton gradient. In Crucihimalaya wallichii (Rock-cress), this protein is NAD(P)H-quinone oxidoreductase subunit J, chloroplastic.